The primary structure comprises 478 residues: MLHLSDFSGPDALLSKPTEGCAHTSPELPRLPARDAPSAAAYPGGDFLSWALSTCGAGGDLTDSCFLEGPAPTPPSGLSYSGSFFIQAVPEHPHDPEALFNLMSGILGLAPFPSPEAAASRSPLDVPFPAGPDALLPDLYSPDLSSAAFPEAFWEAAPSAGAPSQCLFEPQLSPPDVKPGLRAPPASPALDAAASAFKGPYAPWELLSAGAPGNCGSQGSFQTTPEARFSAVGTKVEDLLSISCPAELPGPASRLYPPGAYDAFSLAPGDLGEGTEGLPALLTPPGGEGGSGGEGGEFLAVPQAQLSPLGLRGAATADFSKALVADLPGGSGVAAPSSPATSFPAAKARRKGRRGGKCSARCFCPRPHVKAFACPVESCVRTFARSDELNRHLRIHTGHKPFQCRICLRNFSRSDHLTTHVRTHTGEKPFACDVCGRRFARSDEKKRHSKVHLKQKARAEERLKGLGFYSLGLSFAAL.

Residues 15–37 (SKPTEGCAHTSPELPRLPARDAP) are disordered. C2H2-type zinc fingers lie at residues 372-396 (FACPVESCVRTFARSDELNRHLRIH), 402-424 (FQCRICLRNFSRSDHLTTHVRTH), and 430-452 (FACDVCGRRFARSDEKKRHSKVH).

The protein belongs to the EGR C2H2-type zinc-finger protein family.

Its subcellular location is the nucleus. Its function is as follows. Transcriptional regulator. Recognizes and binds to the DNA sequence 5'-GCGGGGGCG-3' (GSG). Activates the transcription of target genes whose products are required for mitogenesis and differentiation. The chain is Early growth response protein 4 (Egr4) from Rattus norvegicus (Rat).